Here is a 318-residue protein sequence, read N- to C-terminus: Olfactory receptor 5M5 (318 aa).

At 1-31 (MLAPKKMVRGNYSMVTEFILLGLTDRPELQP) the chain is on the extracellular side. A glycan (N-linked (GlcNAc...) asparagine) is linked at N11. The helical transmembrane segment at 32-52 (LLFVLFLVIYLITVGGNLGMM) threads the bilayer. Residues 53 to 60 (VLIRIDSR) are Cytoplasmic-facing. A helical transmembrane segment spans residues 61–81 (LHTPMYYFLASLSCLDLCYST). Topologically, residues 82 to 105 (NVTPKMLVNFLSEKKTISYAACLV) are extracellular. A disulfide bridge links C103 with C195. A helical transmembrane segment spans residues 106–126 (QCYFFIAMVITEYYMLAVMAY). Residues 127–139 (DRYMAICNPLLYS) are Cytoplasmic-facing. The helical transmembrane segment at 140–160 (SKMSKGVCVRLIAGPYIYGFL) threads the bilayer. Residues 161–202 (SGLMETMWTYRLTFCGSNIINHFYCADPPLIRLSCSDTFIKE) are Extracellular-facing. Residues 203–223 (TSMFVVAGFNLSNSLFIILIS) traverse the membrane as a helical segment. Residues 224-243 (YLFILIAILRMRSAEGRRKA) are Cytoplasmic-facing. The helical transmembrane segment at 244–264 (FSTCGSHLVAVTVFYGTLFCM) threads the bilayer. Over 265-277 (YVRPPTDKSVEQS) the chain is Extracellular. Residues 278–298 (KIIAVFYTFVSPMLNPIIYSL) traverse the membrane as a helical segment. The Cytoplasmic segment spans residues 299–318 (RNKDVKHAFWKLVRRNVLSK).

The protein belongs to the G-protein coupled receptor 1 family.

The protein localises to the cell membrane. Potential odorant receptor. The sequence is that of Olfactory receptor 5M5 from Mus musculus (Mouse).